Consider the following 562-residue polypeptide: Urocanate hydratase (562 aa).

NAD(+) is bound by residues 52–53 (GG), Gln-130, 176–178 (GMG), Glu-196, Arg-201, 242–243 (NA), 263–267 (QTSAH), 273–274 (YL), and Tyr-322. Cys-410 is a catalytic residue. Gly-492 lines the NAD(+) pocket.

Belongs to the urocanase family. Requires NAD(+) as cofactor.

Its subcellular location is the cytoplasm. It carries out the reaction 4-imidazolone-5-propanoate = trans-urocanate + H2O. It participates in amino-acid degradation; L-histidine degradation into L-glutamate; N-formimidoyl-L-glutamate from L-histidine: step 2/3. Functionally, catalyzes the conversion of urocanate to 4-imidazolone-5-propionate. In Klebsiella pneumoniae (strain 342), this protein is Urocanate hydratase.